The chain runs to 488 residues: Annexin A7 (488 aa).

Pro residues predominate over residues 1 to 18 (MSYPGYPPTGYPPFPGYP). Disordered stretches follow at residues 1 to 49 (MSYP…YPQV) and 71 to 143 (GYPG…PTYP). A repeat-rich region region spans residues 1 to 143 (MSYPGYPPTG…QYPGGQPTYP (143 aa)). A 3 X 5 AA tandem repeats of G-Y-P-P-X region spans residues 5–20 (GYPPTGYPPFPGYPPA). The segment covering 89-102 (PGQGFGVPPGGAGF) has biased composition (gly residues). Annexin repeat units lie at residues 185–256 (FDAI…ALFM), 257–328 (PPTY…SMCQ), 340–412 (QMAQ…TILQ), and 416–487 (NRPA…AIVG). Lys-233 carries the post-translational modification N6-acetyllysine.

It belongs to the annexin family. In terms of assembly, interacts with PDCD6. Isoform 1 is expressed in brain, heart and skeletal muscle. Isoform 2 is more abundant in liver, lung, kidney, spleen, fibroblasts and placenta.

Functionally, calcium/phospholipid-binding protein which promotes membrane fusion and is involved in exocytosis. This is Annexin A7 (ANXA7) from Homo sapiens (Human).